Here is a 370-residue protein sequence, read N- to C-terminus: Binary larvicide subunit BinA (370 aa).

Positions 1–6 (MRNLDF) are excised as a propeptide. The interval 1 to 155 (MRNLDFIDSF…LISNKEQIYL (155 aa)) is beta-trefoil domain. Residues Cys-31 and Cys-47 are joined by a disulfide bond. Residues 156–370 (TLPSLPENEQ…NTKIITDDQN (215 aa)) are pore-forming domain.

It belongs to the toxin_10 family. As to quaternary structure, forms a heterodimer with BinB. In terms of processing, processed by proteases in the mosquito gut, probably at both the N- and C-termini.

It localises to the spore. Its subcellular location is the perispore. Its function is as follows. Component of a binary toxin active against Culex and some Aedes mosquito larvae; mortality towards both C.quinquefasciatus and A.atropalpus is maximal by 48 hours. A.aegypti is not very susceptible to this toxin. Binary toxin internalization into host gut cells requires both proteins. The sequence is that of Binary larvicide subunit BinA (binA) from Lysinibacillus sphaericus (Bacillus sphaericus).